The chain runs to 622 residues: 1-deoxy-D-xylulose-5-phosphate synthase (622 aa).

Thiamine diphosphate-binding positions include H71 and G112 to S114. D143 is a Mg(2+) binding site. Thiamine diphosphate-binding positions include G144–A145, N172, Y283, and E363. Residue N172 coordinates Mg(2+).

This sequence belongs to the transketolase family. DXPS subfamily. In terms of assembly, homodimer. Requires Mg(2+) as cofactor. Thiamine diphosphate serves as cofactor.

The enzyme catalyses D-glyceraldehyde 3-phosphate + pyruvate + H(+) = 1-deoxy-D-xylulose 5-phosphate + CO2. It participates in metabolic intermediate biosynthesis; 1-deoxy-D-xylulose 5-phosphate biosynthesis; 1-deoxy-D-xylulose 5-phosphate from D-glyceraldehyde 3-phosphate and pyruvate: step 1/1. Functionally, catalyzes the acyloin condensation reaction between C atoms 2 and 3 of pyruvate and glyceraldehyde 3-phosphate to yield 1-deoxy-D-xylulose-5-phosphate (DXP). This chain is 1-deoxy-D-xylulose-5-phosphate synthase, found in Caldanaerobacter subterraneus subsp. tengcongensis (strain DSM 15242 / JCM 11007 / NBRC 100824 / MB4) (Thermoanaerobacter tengcongensis).